Reading from the N-terminus, the 325-residue chain is Beta-ketoacyl-[acyl-carrier-protein] synthase III (325 aa).

Active-site residues include Cys-119 and His-252. An ACP-binding region spans residues 253–257 (QANIR). Asn-282 is a catalytic residue.

This sequence belongs to the thiolase-like superfamily. FabH family. In terms of assembly, homodimer.

It localises to the cytoplasm. The enzyme catalyses malonyl-[ACP] + acetyl-CoA + H(+) = 3-oxobutanoyl-[ACP] + CO2 + CoA. It functions in the pathway lipid metabolism; fatty acid biosynthesis. Catalyzes the condensation reaction of fatty acid synthesis by the addition to an acyl acceptor of two carbons from malonyl-ACP. Catalyzes the first condensation reaction which initiates fatty acid synthesis and may therefore play a role in governing the total rate of fatty acid production. Possesses both acetoacetyl-ACP synthase and acetyl transacylase activities. Its substrate specificity determines the biosynthesis of branched-chain and/or straight-chain of fatty acids. This Polaromonas sp. (strain JS666 / ATCC BAA-500) protein is Beta-ketoacyl-[acyl-carrier-protein] synthase III.